The following is a 20-amino-acid chain: Basic phospholipase A2 cannitoxin alpha chain (20 aa).

In terms of assembly, heterotrimer of alpha, beta, and gamma chains; non-covalently linked. Requires Ca(2+) as cofactor. In terms of tissue distribution, expressed by the venom gland.

Its subcellular location is the secreted. It carries out the reaction a 1,2-diacyl-sn-glycero-3-phosphocholine + H2O = a 1-acyl-sn-glycero-3-phosphocholine + a fatty acid + H(+). Its function is as follows. Heterotrimer: Snake venom phospholipase A2 (PLA2) heterotrimer that acts as a potent presynaptic neurotoxin by blocking synaptic transmission and synaptic vesicle recycling. Enzymatic activity is essential for the neurotoxic effects. May act by binding in a calcium-dependent fashion to neurotonal pentraxin-1 (NPTX1) and neurotonal pentraxin-2 (NPTX2), but not to neuronal pentraxin receptor (NPTXR). Also binds to taipoxin-associated calcium binding protein 49 (RCN2), a protein localized in the lumen of endoplasmic reticulum. Monomer (alpha chain): Snake venom phospholipase A2 (PLA2) that possesses a low level of presynaptic activity and the same high enzymatic activity than the heterotrimer. PLA2 catalyzes the calcium-dependent hydrolysis of the 2-acyl groups in 3-sn-phosphoglycerides. This Oxyuranus scutellatus canni (Papuan taipan) protein is Basic phospholipase A2 cannitoxin alpha chain.